A 160-amino-acid polypeptide reads, in one-letter code: Globin-like protein (160 aa).

A Globin domain is found at 2–152; it reads SMTRQEIQDL…FNAECQVHLK (151 aa). H101 contributes to the heme binding site.

The protein belongs to the globin family.

It is found in the cytoplasm. May be a globin and may play a role in oxygen transport. This Caenorhabditis briggsae protein is Globin-like protein (glb-1).